The following is a 468-amino-acid chain: Glutamate--tRNA ligase (468 aa).

The short motif at 9–19 is the 'HIGH' region element; that stretch reads PSPTGSIHIGN. Positions 239–243 match the 'KMSKS' region motif; that stretch reads KLSKR. Residue K242 participates in ATP binding.

This sequence belongs to the class-I aminoacyl-tRNA synthetase family. Glutamate--tRNA ligase type 1 subfamily. As to quaternary structure, monomer.

It localises to the cytoplasm. It carries out the reaction tRNA(Glu) + L-glutamate + ATP = L-glutamyl-tRNA(Glu) + AMP + diphosphate. Catalyzes the attachment of glutamate to tRNA(Glu) in a two-step reaction: glutamate is first activated by ATP to form Glu-AMP and then transferred to the acceptor end of tRNA(Glu). This Blochmanniella pennsylvanica (strain BPEN) protein is Glutamate--tRNA ligase.